The chain runs to 502 residues: RNA polymerase sigma factor sigA (502 aa).

The N-terminal 23 residues, 1–23, are a transit peptide targeting the chloroplast; sequence MATAAVIGLNTGKRLLSSSFYHS. The span at 57-71 shows a compositional bias: polar residues; the sequence is YSPSFPSSNRHTQSA. The interval 57 to 92 is disordered; that stretch reads YSPSFPSSNRHTQSAKALKESVDVASTEKPWLPNGT. Residue threonine 170 is modified to Phosphothreonine. Residues 287–300 carry the Polymerase core binding motif; the sequence is DLVQGGLIGLLRGI. Residues 461-480 constitute a DNA-binding region (H-T-H motif); the sequence is WEDISKRIGLSRERVRQVGL.

It belongs to the sigma-70 factor family. In terms of assembly, interacts with SIB1 in chloroplast. Binds to CSK. The phosphorylation of Thr-170 mediated by oxidative conditions of plastoquinone (PQ) changes the promoter specificity, selectively inhibiting the transcription of the psaA gene, which encodes a PS-I protein. Phosphorylation of the holoenzyme occurs in the dark. This phosphorylation in response to plastoquinone redox state modification is mediated by CSK. As to expression, highly expressed in leaves, and to a lesser extent in roots. Expressed in old seedlings (8 days), cotyledons, hypocotyls, leaves, sepals and siliques.

The protein resides in the plastid. Its subcellular location is the chloroplast. Its function is as follows. Essential protein. Sigma factors are initiation factors that promote the attachment of plastid-encoded RNA polymerase (PEP) to specific initiation sites and are then released. Controls the transcription of the psaA gene and thus modulates photosystem stoichiometry. Thereby maintains a harmonious electron flow and photosynthetic efficiency. The protein is RNA polymerase sigma factor sigA (SIGA) of Arabidopsis thaliana (Mouse-ear cress).